Reading from the N-terminus, the 465-residue chain is Clusterin-like protein 1 (465 aa).

Residues 1–20 (MKPPILVFIVYLLQLRDCQC) form the signal peptide. A coiled-coil region spans residues 62–107 (LMERREEEHSKLMRTLKKCREEKQEALKLMNEVQEHLEEEERLCQV). Cystine bridges form between C105–C333, C116–C325, C119–C322, C124–C315, and C131–C305. N196 and N257 each carry an N-linked (GlcNAc...) asparagine glycan. The interval 280–300 (LSKQDKDSAHGGPSSTTWPVR) is disordered. N-linked (GlcNAc...) asparagine glycosylation is found at N311, N351, N412, and N430.

Belongs to the clusterin family.

The protein localises to the secreted. This is Clusterin-like protein 1 from Bos taurus (Bovine).